Consider the following 555-residue polypeptide: Potassium-transporting ATPase potassium-binding subunit (555 aa).

10 helical membrane passes run 2-22 (IWVA…PTGI), 60-80 (QYAL…YFIF), 130-150 (IGIT…VMAF), 173-193 (VFLP…VPQT), 246-266 (MSNI…PFTY), 278-298 (ILFV…TTSE), 374-394 (AGFV…GLMV), 412-432 (LIAV…ALAL), 483-503 (LVMF…AASL), and 525-545 (GIFI…MLVL).

The protein belongs to the KdpA family. As to quaternary structure, the system is composed of three essential subunits: KdpA, KdpB and KdpC.

The protein localises to the cell membrane. Part of the high-affinity ATP-driven potassium transport (or Kdp) system, which catalyzes the hydrolysis of ATP coupled with the electrogenic transport of potassium into the cytoplasm. This subunit binds the extracellular potassium ions and delivers the ions to the membrane domain of KdpB through an intramembrane tunnel. In Bacillus mycoides (strain KBAB4) (Bacillus weihenstephanensis), this protein is Potassium-transporting ATPase potassium-binding subunit.